The chain runs to 97 residues: Essential MCU regulator, mitochondrial (97 aa).

The N-terminal 35 residues, 1–35, are a transit peptide targeting the mitochondrion; the sequence is MIVPRLALPISLALQRVSRRVAEHPHNLRILQRHM. A helical transmembrane segment spans residues 53 to 73; the sequence is PFGLLAIFCAVIPGLFVGATI.

Belongs to the SMDT1/EMRE family.

It localises to the mitochondrion inner membrane. Functionally, essential regulatory subunit of the mitochondrial calcium uniporter MCU channel, a protein that mediates calcium uptake into mitochondria. The protein is Essential MCU regulator, mitochondrial of Drosophila melanogaster (Fruit fly).